Here is a 612-residue protein sequence, read N- to C-terminus: Probable serine/threonine-protein kinase WNK4 (612 aa).

The 258-residue stretch at 25–282 (IRYNEVLGRG…AKELLQDPFL (258 aa)) folds into the Protein kinase domain. ATP is bound by residues 105–108 (TELF) and K155. The Proton acceptor role is filled by D172.

Belongs to the protein kinase superfamily. Ser/Thr protein kinase family. WNK subfamily.

It carries out the reaction L-seryl-[protein] + ATP = O-phospho-L-seryl-[protein] + ADP + H(+). The catalysed reaction is L-threonyl-[protein] + ATP = O-phospho-L-threonyl-[protein] + ADP + H(+). The chain is Probable serine/threonine-protein kinase WNK4 (WNK4) from Oryza sativa subsp. japonica (Rice).